The chain runs to 129 residues: Basic blue protein (129 aa).

An N-terminal signal peptide occupies residues 1-33 (MAKGRGSASWSARAIVTLMAVSVLLLQADYVQA). The Phytocyanin domain occupies 34-129 (ATYTVGDSGI…SDMKIAVTAV (96 aa)). The Cu cation site is built by His-72, Cys-112, His-117, and Met-122. A disulfide bridge connects residues Cys-85 and Cys-118.

Expressed in the inflorescence and in the transmitting tract of the pistil. Detected in roots, stems, cauline leaves, cotyledons, hypocotyls, guard cells, pistils, sepals, stamen filaments and vascular bundles of roots but not of leaves. Not expressed in petals, anthers or pollen.

Its subcellular location is the secreted. It localises to the extracellular space. It is found in the extracellular matrix. Functionally, forms a concentration gradient along the pollen tube growth path, with a lower level in the stigma papilla cell wall and a higher level in the transmitting tract extracellular matix of the style. This is Basic blue protein (ARPN) from Arabidopsis thaliana (Mouse-ear cress).